The chain runs to 235 residues: Meiotically up-regulated gene 123 protein (235 aa).

Positions 1-14 (MERLATRSSHDDPY) are enriched in basic and acidic residues. Disordered regions lie at residues 1–34 (MERLATRSSHDDPYSRSSLPTSNAINSNHESNGS), 58–83 (PLHSSPSIKSSSQNGKSSSKGLGGMR), and 169–235 (SRAD…FDSD). Positions 15-34 (SRSSLPTSNAINSNHESNGS) are enriched in polar residues. Residues 61–77 (SSPSIKSSSQNGKSSSK) show a composition bias toward low complexity. Over residues 176 to 202 (ETTQSDGFESRSGSPTHDIQSYLVNRR) the composition is skewed to polar residues. Phosphoserine occurs at positions 180, 187, and 189. Thr191 is modified (phosphothreonine).

The protein localises to the cytoplasm. It is found in the nucleus. Involved in sporulation and has a role in meiosis. This chain is Meiotically up-regulated gene 123 protein (mug123), found in Schizosaccharomyces pombe (strain 972 / ATCC 24843) (Fission yeast).